The sequence spans 374 residues: MNALFIIIFMIVVGAIIGGITNVIAIRMLFHPFKPYYIFKFRVPFTPGLIPKRREEIATKIGQVIEEHLLTETLINEKLKSEQSQQAIESMIQQQLQKLTKDQLSIKQITSQIDIDIEQVLQTNGNQYIASQLNNYYTKHQNQTIASLLPNQLVTFLDQHVDNATDLLCDRARNYLSSAKGTQDINDMLDTFFNEKGKLIGMLQMFMTKESIADRIQQELIRLTSHPKARAIVTSLITNEYQTFKDKPLNELLDASQFNEIAENLSVYVTTYASKQANKPVVTLMPQFVDYLEGQLSSKLANLIIEQLSIHLSTIMKKVDLRGLIEEQINTFDLDYIEKLIIEIANKELKLIMSLGFILGGIIGFFQGLVAIFV.

2 helical membrane-spanning segments follow: residues 4-24 (LFII…TNVI) and 354-374 (SLGF…AIFV).

The protein belongs to the UPF0754 family.

The protein resides in the cell membrane. The sequence is that of UPF0754 membrane protein SAB1779c from Staphylococcus aureus (strain bovine RF122 / ET3-1).